The primary structure comprises 381 residues: 4-hydroxyphenylpyruvate dioxygenase (381 aa).

VOC domains are found at residues 22–156 and 184–338; these read GMDA…LVER and AVDH…IFTK. 3 residues coordinate Fe cation: H187, H270, and E349.

Belongs to the 4HPPD family. In terms of assembly, homodimer. It depends on Fe cation as a cofactor.

The catalysed reaction is 3-(4-hydroxyphenyl)pyruvate + O2 = homogentisate + CO2. The protein operates within amino-acid degradation; L-phenylalanine degradation; acetoacetate and fumarate from L-phenylalanine: step 3/6. This Streptomyces coelicolor (strain ATCC BAA-471 / A3(2) / M145) protein is 4-hydroxyphenylpyruvate dioxygenase (hpd).